A 149-amino-acid chain; its full sequence is Deoxyuridine 5'-triphosphate nucleotidohydrolase (149 aa).

Substrate is bound by residues 68-70 (RSG), asparagine 81, 85-87 (LID), and methionine 95.

It belongs to the dUTPase family. The cofactor is Mg(2+).

It catalyses the reaction dUTP + H2O = dUMP + diphosphate + H(+). It participates in pyrimidine metabolism; dUMP biosynthesis; dUMP from dCTP (dUTP route): step 2/2. This enzyme is involved in nucleotide metabolism: it produces dUMP, the immediate precursor of thymidine nucleotides and it decreases the intracellular concentration of dUTP so that uracil cannot be incorporated into DNA. This chain is Deoxyuridine 5'-triphosphate nucleotidohydrolase, found in Polynucleobacter asymbioticus (strain DSM 18221 / CIP 109841 / QLW-P1DMWA-1) (Polynucleobacter necessarius subsp. asymbioticus).